A 499-amino-acid chain; its full sequence is BTB/POZ domain-containing protein At5g60050 (499 aa).

A compositionally biased stretch (low complexity) spans 18-30 (PSLSFSPSRISSP). A disordered region spans residues 18–57 (PSLSFSPSRISSPIKLSTASPPLPPPPPPPPNESTLSNPT). Positions 38–49 (PPLPPPPPPPPN) are enriched in pro residues. One can recognise a BTB domain in the interval 99–172 (GDVKLTVVGK…MYSDDLKKKL (74 aa)).

The protein operates within protein modification; protein ubiquitination. In terms of biological role, may act as a substrate-specific adapter of an E3 ubiquitin-protein ligase complex (CUL3-RBX1-BTB) which mediates the ubiquitination and subsequent proteasomal degradation of target proteins. In Arabidopsis thaliana (Mouse-ear cress), this protein is BTB/POZ domain-containing protein At5g60050.